We begin with the raw amino-acid sequence, 137 residues long: Small ribosomal subunit protein uS12 (137 aa).

Aspartate 102 is modified (3-methylthioaspartic acid).

It belongs to the universal ribosomal protein uS12 family. Part of the 30S ribosomal subunit. Contacts proteins S8 and S17. May interact with IF1 in the 30S initiation complex.

Functionally, with S4 and S5 plays an important role in translational accuracy. Interacts with and stabilizes bases of the 16S rRNA that are involved in tRNA selection in the A site and with the mRNA backbone. Located at the interface of the 30S and 50S subunits, it traverses the body of the 30S subunit contacting proteins on the other side and probably holding the rRNA structure together. The combined cluster of proteins S8, S12 and S17 appears to hold together the shoulder and platform of the 30S subunit. The sequence is that of Small ribosomal subunit protein uS12 from Mesoplasma florum (strain ATCC 33453 / NBRC 100688 / NCTC 11704 / L1) (Acholeplasma florum).